We begin with the raw amino-acid sequence, 367 residues long: MASSGGELGSLFDHHVQRAVCDTRAKYREGRRPRAVKVYTINLESQYLLIQGVPAVGVMKELVERFALYGTIEQYNALDEYPAEDFTEVYLIKFMNLQSARAAKRKMDEQSFFGGLLHVCYAPEFETVEETRKKLQVRKAYVVKTTENKDHYVTKKKLVTEHKDTEDFRQDFHSEMSGFCKAALNTSAGNSNPYLPYSCELPLCYFSSKCMCSSRGPVDRASDSSKDGRNHHKTMGHYNHNGSLQKTQINSFKNSVACPGAQKAVTSSEAVDRFMPRTTQLQERKRRREDDRKLGTFLQTNPSGNEVMIGPLLPDISKVDMHDDSLNTTANLIRHKLKEVISSVPKPPEDKPEDVNTSHPLKQRRRI.

The RRM domain occupies 46 to 124; that stretch reads QYLLIQGVPA…GLLHVCYAPE (79 aa). Basic and acidic residues predominate over residues 217 to 228; that stretch reads PVDRASDSSKDG. Disordered stretches follow at residues 217–243, 277–303, and 339–367; these read PVDR…HNGS, RTTQ…TNPS, and EVIS…RRRI. Residues 347–356 show a composition bias toward basic and acidic residues; that stretch reads PPEDKPEDVN.

This sequence belongs to the RBM48 family. As to quaternary structure, component of the minor spliceosome. Within this complex, interacts with ARMC7 and PRPF8/PRP8.

In terms of biological role, as a component of the minor spliceosome, involved in the splicing of U12-type introns in pre-mRNAs. In Pongo abelii (Sumatran orangutan), this protein is RNA-binding protein 48 (RBM48).